A 148-amino-acid polypeptide reads, in one-letter code: Ribosome maturation factor RimP (148 aa).

Belongs to the RimP family.

It localises to the cytoplasm. Required for maturation of 30S ribosomal subunits. This chain is Ribosome maturation factor RimP, found in Nautilia profundicola (strain ATCC BAA-1463 / DSM 18972 / AmH).